Here is a 185-residue protein sequence, read N- to C-terminus: Peptidoglycan-recognition protein SC1a (185 aa).

Positions 1-21 (MVSKVALLLAVLVCSQYMAQG) are cleaved as a signal peptide. One can recognise an N-acetylmuramoyl-L-alanine amidase domain in the interval 46 to 170 (SYAIIHHTAG…RQVSATECPG (125 aa)). A Zn(2+)-binding site is contributed by histidine 51. Cysteine 58 and cysteine 64 form a disulfide bridge. The Zn(2+) site is built by histidine 160 and cysteine 168.

This sequence belongs to the N-acetylmuramoyl-L-alanine amidase 2 family. It depends on Zn(2+) as a cofactor.

It is found in the secreted. It carries out the reaction Hydrolyzes the link between N-acetylmuramoyl residues and L-amino acid residues in certain cell-wall glycopeptides.. In terms of biological role, N-acetylmuramyl-L-alanine amidase involved in innate immunity by degrading bacterial peptidoglycans (PGN). Plays a scavenger role by digesting biologically active PGN into biologically inactive fragments. Has no direct bacteriolytic activity. In Drosophila melanogaster (Fruit fly), this protein is Peptidoglycan-recognition protein SC1a.